A 680-amino-acid chain; its full sequence is DNA-directed RNA polymerase subunit beta' (680 aa).

Positions 69, 71, 87, and 90 each coordinate Zn(2+). Mg(2+)-binding residues include Asp-489, Asp-491, and Asp-493.

This sequence belongs to the RNA polymerase beta' chain family. RpoC1 subfamily. As to quaternary structure, in plastids the minimal PEP RNA polymerase catalytic core is composed of four subunits: alpha, beta, beta', and beta''. When a (nuclear-encoded) sigma factor is associated with the core the holoenzyme is formed, which can initiate transcription. It depends on Mg(2+) as a cofactor. The cofactor is Zn(2+).

It localises to the plastid. The protein localises to the chloroplast. It catalyses the reaction RNA(n) + a ribonucleoside 5'-triphosphate = RNA(n+1) + diphosphate. In terms of biological role, DNA-dependent RNA polymerase catalyzes the transcription of DNA into RNA using the four ribonucleoside triphosphates as substrates. This Nandina domestica (Heavenly bamboo) protein is DNA-directed RNA polymerase subunit beta'.